Consider the following 251-residue polypeptide: MRRPMVAGNWKMHGTRASVAELIEGLVKQALPGSVDIAVMPASLFTSRVIEGLQGTSIIVGAQDAAIQAEQGALTGEIASSQLADAGCKLVLVGHSERRQLIGEQDEVLNKKFAAIQASGLTPVLCIGETLEERKAGQTLEVVGRQLDSVIAEFGIGALVNAVIAYEPVWAIGTGLTASPQEAQEVHAAIRAQLAKENAEVAQGVRLLYGGSVKAANAVELFSMPDIDGGLIGGASLNADEFGAICRAAGN.

Asn-9–Lys-11 provides a ligand contact to substrate. Catalysis depends on His-95, which acts as the Electrophile. Glu-167 acts as the Proton acceptor in catalysis. Substrate-binding positions include Gly-173, Ser-212, and Gly-233 to Gly-234.

It belongs to the triosephosphate isomerase family. As to quaternary structure, homodimer.

Its subcellular location is the cytoplasm. The enzyme catalyses D-glyceraldehyde 3-phosphate = dihydroxyacetone phosphate. The protein operates within carbohydrate biosynthesis; gluconeogenesis. It participates in carbohydrate degradation; glycolysis; D-glyceraldehyde 3-phosphate from glycerone phosphate: step 1/1. Involved in the gluconeogenesis. Catalyzes stereospecifically the conversion of dihydroxyacetone phosphate (DHAP) to D-glyceraldehyde-3-phosphate (G3P). This Pseudomonas syringae pv. tomato (strain ATCC BAA-871 / DC3000) protein is Triosephosphate isomerase.